A 133-amino-acid polypeptide reads, in one-letter code: Small ribosomal subunit protein uS12 (133 aa).

At Asp89 the chain carries 3-methylthioaspartic acid. The tract at residues 103 to 133 (DTAGVAGRTQRRSKYGAKRPKPGQAAPAKKK) is disordered. Residues 111 to 123 (TQRRSKYGAKRPK) are compositionally biased toward basic residues. Residues 124-133 (PGQAAPAKKK) are compositionally biased toward low complexity.

The protein belongs to the universal ribosomal protein uS12 family. Part of the 30S ribosomal subunit. Contacts proteins S8 and S17. May interact with IF1 in the 30S initiation complex.

In terms of biological role, with S4 and S5 plays an important role in translational accuracy. Functionally, interacts with and stabilizes bases of the 16S rRNA that are involved in tRNA selection in the A site and with the mRNA backbone. Located at the interface of the 30S and 50S subunits, it traverses the body of the 30S subunit contacting proteins on the other side and probably holding the rRNA structure together. The combined cluster of proteins S8, S12 and S17 appears to hold together the shoulder and platform of the 30S subunit. In Bacteroides thetaiotaomicron (strain ATCC 29148 / DSM 2079 / JCM 5827 / CCUG 10774 / NCTC 10582 / VPI-5482 / E50), this protein is Small ribosomal subunit protein uS12.